The primary structure comprises 131 residues: MVPLFITSDSALTYSPLPEPPPTPALGGQRGPPTCQCPDFPYPVPPSEGCPSGRLLLSLHWDWGRGAGGSWSGGAWPGSPGWRLARGPAHGASAESLGPLGKALVTGWEGGWRGGQGGACSPWYFPIPAAL.

Positions 13-32 are disordered; it reads TYSPLPEPPPTPALGGQRGP.

This is an uncharacterized protein from Homo sapiens (Human).